An 851-amino-acid polypeptide reads, in one-letter code: B-box type zinc finger protein ncl-1 (851 aa).

The disordered stretch occupies residues 71-91 (GFGFGSPSSTTSSSPPLSNSP). The span at 76–91 (SPSSTTSSSPPLSNSP) shows a compositional bias: low complexity. The segment at 127-174 (VPAVHCSGCKSNETATSFCQDCNANLCDNCTMAHKFMHCFADHRVVSL) adopts a B box-type 1; atypical zinc-finger fold. 4 residues coordinate Zn(2+): Cys-132, Cys-135, Cys-156, and His-160. Residues 176–197 (TPGTGSSSSSTSSSSSASSTSS) are compositionally biased toward low complexity. The disordered stretch occupies residues 176–211 (TPGTGSSSSSTSSSSSASSTSSHQVPSLGGKQSPDS). The segment at 218-261 (KRSVLCLQHRASELVFFCVSCNLAICRDCTVSDHPSGTHQYELI) adopts a B box-type 2 zinc-finger fold. Cys-223, His-226, Cys-246, and His-251 together coordinate Zn(2+). Residues 303 to 331 (SLHNAHAQLEETVSNLINVIQDQKKTLAK) adopt a coiled-coil conformation. NHL repeat units lie at residues 573–616 (HCKF…FDKE), 620–665 (KFQF…YNQY), 666–707 (GQFL…FDMF), 708–750 (GNIL…FSYE), and 751–794 (GQYL…FSQD).

In terms of tissue distribution, present in cells in which nucleoli are absent, and absent from large cells in which nucleoli are prominent. Highly expressed in the gonads.

The protein localises to the cytoplasm. Functionally, translational repressor that inhibits protein synthesis. Represses the translation of mRNAs such as fib-1, probably by being recruited by RNA-binding protein nos-2 and the Pumilio proteins puf-5, puf-8 and puf-9 to the consensus core PUF binding motif in the 3'-UTR of fib-1 mRNA. Negatively regulates ribosomal RNA (rRNA) synthesis, ribosomal protein synthesis and nucleolus size. Its role in the negative regulation of nucleolus size is most likely through its negative regulation of the translation of proteins such as the rRNA 2'-O-methyltransferase fib-1, and dao-5. Might act directly as a transcription factor to inhibit RNA polymerase I (rRNA) and III (5S RNA) transcription. Plays a role in embryonic development, and in particular, is involved in regulating the localization of proteins, such as par-2, that are required for embryonic cell polarity. Plays a role in the regulation of lifespan, and the response to nutrient availability. The protein is B-box type zinc finger protein ncl-1 of Caenorhabditis elegans.